The following is a 216-amino-acid chain: NKG2-D type II integral membrane protein (216 aa).

Residues Met1–Ser51 lie on the Cytoplasmic side of the membrane. Residues Pro52–Thr72 form a helical; Signal-anchor for type II membrane protein membrane-spanning segment. Residues Ile73 to Val216 lie on the Extracellular side of the membrane. 2 disulfide bridges follow: Cys96–Cys105 and Cys99–Cys110. One can recognise a C-type lectin domain in the interval Pro98–Gln213. Residues Asn115, Asn131, Asn163, and Asn202 are each glycosylated (N-linked (GlcNAc...) asparagine). 2 cysteine pairs are disulfide-bonded: Cys127–Cys211 and Cys189–Cys203.

Homodimer; disulfide-linked. Heterohexamer composed of two subunits of KLRK1 and four subunits of HCST/DAP10. Interacts (via transmembrane domain) with HCST/DAP10 (via transmembrane domain); the interaction is required for KLRK1 NK cell surface and induces NK cell-mediated cytotoxicity. Can form disulfide-bonded heterodimer with CD94. Interacts with CEACAM1; recruits PTPN6 that dephosphorylates VAV1.

The protein resides in the cell membrane. Its function is as follows. Functions as an activating and costimulatory receptor involved in immunosurveillance upon binding to various cellular stress-inducible ligands displayed at the surface of autologous tumor cells and virus-infected cells. Provides both stimulatory and costimulatory innate immune responses on activated killer (NK) cells, leading to cytotoxic activity. Acts as a costimulatory receptor for T-cell receptor (TCR) in CD8(+) T-cell-mediated adaptive immune responses by amplifying T-cell activation. Stimulates perforin-mediated elimination of ligand-expressing tumor cells. Signaling involves calcium influx, culminating in the expression of TNF-alpha. Participates in NK cell-mediated bone marrow graft rejection. May play a regulatory role in differentiation and survival of NK cells. Binds to ligands belonging to various subfamilies of MHC class I-related glycoproteins. The polypeptide is NKG2-D type II integral membrane protein (KLRK1) (Pongo pygmaeus (Bornean orangutan)).